Consider the following 527-residue polypeptide: DNA damage-binding protein cmr1 (527 aa).

The interval 35–90 is disordered; it reads AGLFPPKSARSSPGGLTKPKKKPAPKKVKKEDEDLVPRRMSSRLRGLAADSEVAKR. A compositionally biased stretch (basic residues) spans 52-62; the sequence is KPKKKPAPKKV. WD repeat units follow at residues 185–226, 249–289, 296–336, 341–381, 388–427, 450–493, and 496–527; these read LTPE…PISA, PHTR…SVEK, SDDI…RSAV, LSEK…HDEP, VSRL…AAWK, GRWV…LAQL, and DGIT…CLWM. Residues 284–303 form a disordered region; it reads TTSVEKYAPESTSDDIPISG.

It belongs to the WD repeat DDB2/WDR76 family.

In terms of biological role, DNA-binding protein that binds to both single- and double-stranded DNA. Binds preferentially to UV-damaged DNA. May be involved in DNA-metabolic processes. The sequence is that of DNA damage-binding protein cmr1 from Neosartorya fischeri (strain ATCC 1020 / DSM 3700 / CBS 544.65 / FGSC A1164 / JCM 1740 / NRRL 181 / WB 181) (Aspergillus fischerianus).